The following is a 301-amino-acid chain: Rhodopsin (301 aa).

At 1-18 (LHMIHLHWYQYPPMNPMM) the chain is on the extracellular side. The helical transmembrane segment at 19–43 (YPLLLIFMLFTGILCLAGNFVTIWV) threads the bilayer. The Cytoplasmic segment spans residues 44-55 (FMNTKSLRTPAN). The chain crosses the membrane as a helical span at residues 56–78 (LLVVNLAMSDFLMMFTMFPPMMV). Over 79 to 92 (TCYYHTWTLGPTFC) the chain is Extracellular. An intrachain disulfide couples C92 to C169. The chain crosses the membrane as a helical span at residues 93–115 (QVYAFLGNLCGCASIWTMVFITF). Residues 116–118 (DRY) carry the 'Ionic lock' involved in activated form stabilization motif. Residues 116–134 (DRYNVIVKGVAGEPLSTKK) are Cytoplasmic-facing. Residues 135–155 (ASLWILSVWVLSTAWCIAPFF) traverse the membrane as a helical segment. Residues 156–182 (GWNHYVPEGNLTGCGTDYLSEDILSRS) are Extracellular-facing. N165 carries an N-linked (GlcNAc...) asparagine glycan. A helical membrane pass occupies residues 183–204 (YLYIYSTWVYFLPLAITIYCYV). The Cytoplasmic portion of the chain corresponds to 205–245 (FIIKAVAAHEKGMRDQAKKMGIKSLRNEEAQKTSAECRLAK). Residues 246-267 (NAMTTVALWFIAWTPCLLINWV) form a helical membrane-spanning segment. The Extracellular portion of the chain corresponds to 268–278 (GMFARSYLSPV). The helical transmembrane segment at 279 to 300 (YTIWGYVFAKANAVYNPIVYAI) threads the bilayer. An N6-(retinylidene)lysine modification is found at K288.

This sequence belongs to the G-protein coupled receptor 1 family. Opsin subfamily. In terms of assembly, homodimer. Interacts with GNAQ. Contains one covalently linked retinal chromophore.

It is found in the cell projection. The protein resides in the rhabdomere membrane. Photoreceptor required for image-forming vision at low light intensity. Can use both retinal and 3-dehydroretinal as visual pigment. Light-induced isomerization of 11-cis to all-trans retinal triggers a conformational change that activates signaling via G-proteins. Signaling via GNAQ probably mediates the activation of phospholipase C. The protein is Rhodopsin (RHO) of Cambarus hubrichti (Salem cave crayfish).